Reading from the N-terminus, the 201-residue chain is MSRYRGPRFKKIRRLGALPGLTRKRPRSGSDLRNQSRSGKRSQYRIRLEEKQKLRFHYGLTERQLLRYVRIAGKAKGSTGQVLLQLLEMRLDNILFRLGMASTIPGARQLVNHRHILVNGRIVDIPSYRCKPQDIITTRDEQRSRALIQNYMDSSPHEELAKHLSLYSSQYKGLVNQIIDIKWIGLKINELLVVEYYSRQT.

The disordered stretch occupies residues 15-43 (LGALPGLTRKRPRSGSDLRNQSRSGKRSQ). An S4 RNA-binding domain is found at 89-150 (MRLDNILFRL…EQRSRALIQN (62 aa)).

It belongs to the universal ribosomal protein uS4 family. Part of the 30S ribosomal subunit. Contacts protein S5. The interaction surface between S4 and S5 is involved in control of translational fidelity.

Its subcellular location is the plastid. It localises to the chloroplast. In terms of biological role, one of the primary rRNA binding proteins, it binds directly to 16S rRNA where it nucleates assembly of the body of the 30S subunit. With S5 and S12 plays an important role in translational accuracy. The sequence is that of Small ribosomal subunit protein uS4c (rps4) from Drimys granadensis.